Reading from the N-terminus, the 207-residue chain is Ribosome maturation factor RimM (207 aa).

A PRC barrel domain is found at 114–207 (DDEYYWVDLI…RIDSDWPLDY (94 aa)).

It belongs to the RimM family. As to quaternary structure, binds ribosomal protein uS19.

The protein localises to the cytoplasm. Functionally, an accessory protein needed during the final step in the assembly of 30S ribosomal subunit, possibly for assembly of the head region. Essential for efficient processing of 16S rRNA. May be needed both before and after RbfA during the maturation of 16S rRNA. It has affinity for free ribosomal 30S subunits but not for 70S ribosomes. The chain is Ribosome maturation factor RimM from Bordetella bronchiseptica (strain ATCC BAA-588 / NCTC 13252 / RB50) (Alcaligenes bronchisepticus).